Consider the following 219-residue polypeptide: Redox-sensing transcriptional repressor Rex (219 aa).

Residues 17–56 (VYLRVLDNLVKRDIEVVSSKSLSKETGFTAEQIRKDLAFF) constitute a DNA-binding region (H-T-H motif). Residue 91 to 96 (GAGHLG) coordinates NAD(+).

This sequence belongs to the transcriptional regulatory Rex family. As to quaternary structure, homodimer.

It is found in the cytoplasm. Functionally, modulates transcription in response to changes in cellular NADH/NAD(+) redox state. This chain is Redox-sensing transcriptional repressor Rex, found in Natranaerobius thermophilus (strain ATCC BAA-1301 / DSM 18059 / JW/NM-WN-LF).